Consider the following 109-residue polypeptide: Cell division protein FtsL (109 aa).

The Cytoplasmic segment spans residues 1-3; the sequence is MSR. The chain crosses the membrane as a helical span at residues 4-21; it reads LNIFLLIIVMGCALSVVN. The Periplasmic segment spans residues 22–109; sequence STNQQRQIFI…ASAAPTGGAR (88 aa).

The protein belongs to the FtsL family. In terms of assembly, part of a complex composed of FtsB, FtsL and FtsQ.

It localises to the cell inner membrane. Functionally, essential cell division protein. May link together the upstream cell division proteins, which are predominantly cytoplasmic, with the downstream cell division proteins, which are predominantly periplasmic. The protein is Cell division protein FtsL of Burkholderia pseudomallei (strain K96243).